An 826-amino-acid polypeptide reads, in one-letter code: Arf-GAP with ANK repeat and PH domain-containing protein cnt-1 (826 aa).

One can recognise a PH domain in the interval D275 to L373. The Arf-GAP domain occupies T447–A572. A C4-type zinc finger spans residues C462 to C485. Positions T570–Y604 are disordered. Residues S588 to S603 are compositionally biased toward low complexity. ANK repeat units lie at residues N690–M719, K723–L752, and D756–F789.

Interacts (via C-terminal ankyrin repeat) with rab-10 (GTP-bound form); the interaction is required for cnt-1 recruitment to endosomes. Interacts (via C-terminal ankyrin repeat) with rab-8 (GTP-bound form) and rab-35 (GTP-bound form). Cleaved by caspase ced-3 after Asp-382 and Asp-609. Cleavage at Asp-382 is required for subsequent cleavage at Asp-609.

It localises to the cytoplasm. The protein resides in the recycling endosome membrane. The protein localises to the basolateral cell membrane. Its subcellular location is the apical cell membrane. It is found in the cell membrane. GTPase-activating protein for the ADP ribosylation factor family. Regulates endosome recycling downstream of rab-10 and upstream of arf-6. Functionally, promotes apoptosis during embryonic development. Produced by caspase ced-3-mediated cleavage, and translocates to the plasma membrane where it prevents the activation of the prosurvival Akt-1/2 and sgk-1 signaling pathway by competing with Akt-1/2 for the binding to PtdIns(3,4,5)P3. In Caenorhabditis elegans, this protein is Arf-GAP with ANK repeat and PH domain-containing protein cnt-1.